Here is an 831-residue protein sequence, read N- to C-terminus: Thymine dioxygenase JBP1-B (831 aa).

The interval 80–282 (VVGGVLLPGA…RLTCVCYYRA (203 aa)) is thymine dioxygenase. Residues histidine 207, aspartate 209, and histidine 257 each contribute to the Fe cation site. Arginine 273 serves as a coordination point for 2-oxoglutarate. Residues 409–578 (LGGALKAAEE…IEEARRRGNA (170 aa)) are DNA-binding JBP1 domain.

It belongs to the TET family. JBP1 subfamily. As to quaternary structure, monomer. Binds to DNA as a monomer. Fe(2+) is required as a cofactor.

Its subcellular location is the nucleus. It carries out the reaction thymine + 2-oxoglutarate + O2 = 5-hydroxymethyluracil + succinate + CO2. Functionally, dioxygenase that catalyzes the first step of DNA base J (beta-d-glucosyl-HOMedU) biosynthesis by converting thymine to 5-hydroxymethyluracil (HOMedU). DNA base J is a hypermodified thymidine residue found in the genome of kinetoplastid parasites, which is localized primarily to repetitive DNA, namely the telomeres, and is implicated in the regulation of antigenic variation. Also specifically binds to base J-containing DNA (J-DNA). Involved in propagation and maintenance of DNA base J synthesis initiated by JBP2 by specifically binding already synthesized DNA base J and propagating J synthesis. Thymine dioxygenase activity and J-DNA-binding are independent functions. This is Thymine dioxygenase JBP1-B (JBP1B) from Trypanosoma cruzi (strain CL Brener).